The following is a 377-amino-acid chain: GDP-mannose 3,5-epimerase (377 aa).

Gly-2 bears the N-acetylglycine mark. Residues 34–60 (GAGGFIASHIARRLKHEGHYVIASDWK), Asp-58, and Asp-78 each bind NAD(+). Substrate-binding positions include Gly-103 and 143–145 (SAC). Residues Tyr-174 and Lys-178 each coordinate NAD(+). Tyr-174 functions as the Proton acceptor in the catalytic mechanism. Substrate-binding positions include Asn-203, 216-218 (EKA), Lys-225, 241-243 (QTR), Arg-306, and Ser-356. A Phosphoserine modification is found at Ser-369.

It belongs to the NAD(P)-dependent epimerase/dehydratase family. As to quaternary structure, homodimer. Interacts with chaperone Hsc70-3 protein, which may regulate epimerase activity. The cofactor is NAD(+).

The enzyme catalyses GDP-alpha-D-mannose = GDP-beta-L-gulose. It carries out the reaction GDP-beta-L-gulose = GDP-beta-L-galactose. It functions in the pathway cofactor biosynthesis; L-ascorbate biosynthesis via GDP-alpha-D-mannose pathway; L-ascorbate from GDP-alpha-D-mannose: step 1/5. Its activity is regulated as follows. Inhibited by GDP and GDP-D-glucose. In terms of biological role, catalyzes a reversible epimerization of GDP-D-mannose that precedes the committed step in the biosynthesis of vitamin C (L-ascorbate), resulting in the hydrolysis of the highly energetic glycosyl-pyrophosphoryl linkage. Able to catalyze 2 distinct epimerization reactions and can release both GDP-L-galactose and GDP-L-gulose from GDP-mannose. The protein is GDP-mannose 3,5-epimerase of Arabidopsis thaliana (Mouse-ear cress).